We begin with the raw amino-acid sequence, 386 residues long: Bifunctional enzyme IspD/IspF (386 aa).

Residues 1-230 form a 2-C-methyl-D-erythritol 4-phosphate cytidylyltransferase region; the sequence is MIRDERVAAI…RARSILEAPV (230 aa). Positions 231-386 are 2-C-methyl-D-erythritol 2,4-cyclodiphosphate synthase; it reads AMGVGYDTHR…HAVALLVRVR (156 aa). Residues Asp237 and His239 each coordinate a divalent metal cation. 4-CDP-2-C-methyl-D-erythritol 2-phosphate-binding positions include 237–239 and 262–263; these read DTH and HS. Residue His270 participates in a divalent metal cation binding. 4-CDP-2-C-methyl-D-erythritol 2-phosphate-binding positions include 284–286, 289–293, 360–363, Phe367, and Arg370; these read DLG, FPDTD, and TTGE.

The protein in the N-terminal section; belongs to the IspD/TarI cytidylyltransferase family. IspD subfamily. This sequence in the C-terminal section; belongs to the IspF family. A divalent metal cation is required as a cofactor.

It carries out the reaction 2-C-methyl-D-erythritol 4-phosphate + CTP + H(+) = 4-CDP-2-C-methyl-D-erythritol + diphosphate. It catalyses the reaction 4-CDP-2-C-methyl-D-erythritol 2-phosphate = 2-C-methyl-D-erythritol 2,4-cyclic diphosphate + CMP. It functions in the pathway isoprenoid biosynthesis; isopentenyl diphosphate biosynthesis via DXP pathway; isopentenyl diphosphate from 1-deoxy-D-xylulose 5-phosphate: step 2/6. The protein operates within isoprenoid biosynthesis; isopentenyl diphosphate biosynthesis via DXP pathway; isopentenyl diphosphate from 1-deoxy-D-xylulose 5-phosphate: step 4/6. Bifunctional enzyme that catalyzes the formation of 4-diphosphocytidyl-2-C-methyl-D-erythritol from CTP and 2-C-methyl-D-erythritol 4-phosphate (MEP) (IspD), and catalyzes the conversion of 4-diphosphocytidyl-2-C-methyl-D-erythritol 2-phosphate (CDP-ME2P) to 2-C-methyl-D-erythritol 2,4-cyclodiphosphate (ME-CPP) with a corresponding release of cytidine 5-monophosphate (CMP) (IspF). The polypeptide is Bifunctional enzyme IspD/IspF (Anaeromyxobacter sp. (strain Fw109-5)).